Consider the following 71-residue polypeptide: ATP synthase subunit c (71 aa).

2 helical membrane passes run 9 to 29 (MIGYGLAAIGSAIGVGLIFAA) and 49 to 69 (LLGFALAEALAILGLVFAFVI).

The protein belongs to the ATPase C chain family. In terms of assembly, F-type ATPases have 2 components, F(1) - the catalytic core - and F(0) - the membrane proton channel. F(1) has five subunits: alpha(3), beta(3), gamma(1), delta(1), epsilon(1). F(0) has three main subunits: a(1), b(2) and c(10-14). The alpha and beta chains form an alternating ring which encloses part of the gamma chain. F(1) is attached to F(0) by a central stalk formed by the gamma and epsilon chains, while a peripheral stalk is formed by the delta and b chains.

The protein localises to the cell membrane. Functionally, f(1)F(0) ATP synthase produces ATP from ADP in the presence of a proton or sodium gradient. F-type ATPases consist of two structural domains, F(1) containing the extramembraneous catalytic core and F(0) containing the membrane proton channel, linked together by a central stalk and a peripheral stalk. During catalysis, ATP synthesis in the catalytic domain of F(1) is coupled via a rotary mechanism of the central stalk subunits to proton translocation. Its function is as follows. Key component of the F(0) channel; it plays a direct role in translocation across the membrane. A homomeric c-ring of between 10-14 subunits forms the central stalk rotor element with the F(1) delta and epsilon subunits. The chain is ATP synthase subunit c from Micrococcus luteus (strain ATCC 4698 / DSM 20030 / JCM 1464 / CCM 169 / CCUG 5858 / IAM 1056 / NBRC 3333 / NCIMB 9278 / NCTC 2665 / VKM Ac-2230) (Micrococcus lysodeikticus).